Consider the following 395-residue polypeptide: MWGLCKKHFPSNKIQVQERNKALKPKKSGSEHKTKQLFPVFNCKKKEKGVMIRFAILRNANTSLLSARSICLFTQAPTYCHVRLNTLNKSITTKRNSLTESKRHVHDGKHFFTTPHQQQQTKLGEIEEGHSPNIKGEDLRSIGQAITHQRNKRRKQIWSAIFGGIFGVILGYSLIYRVIYLKEQSFLPLFPSSKIRKLSTRDLKKVDVNQVQKLSKLRVLEILSGHDMIKEQYGVPLLDKDGNSPTLNEFSMWCEDQDPCVTGIVMEPDDKRDSSHTWYRIPFVCKWRITHRPISIRGTIDDLLNRIGLETADLFEIISPERVYGSFKYEYPLQGDSHALHLWFHGEIELDDDSLIVYNGKYHVDVKLQEIDLFRREKNGQLIQYVLYKNEAGDK.

Residues 156–176 (QIWSAIFGGIFGVILGYSLIY) traverse the membrane as a helical segment.

It belongs to the AIM39 family.

It localises to the mitochondrion membrane. The chain is Altered inheritance of mitochondria protein 39, mitochondrial (AIM39) from Saccharomyces cerevisiae (strain ATCC 204508 / S288c) (Baker's yeast).